A 201-amino-acid polypeptide reads, in one-letter code: MIKLIVGLGNPGAEYTATRHNAGFWLVDQLAREAGATLRDERRFHGFYAKARLFGEEVHLLEPQTYMNRSGQAVVALAHFFKILPTEILVAHDELDLPPGAAKLKLGGGSGGHNGLKDISAHLSSQQYWRLRIGIGHPRDLIPESARAGAKPDVANFVLKPPRKDEQDLINAAIERALAVMPTAIKGETERAMMQLHRNGA.

Tyr-15 provides a ligand contact to tRNA. His-20 acts as the Proton acceptor in catalysis. Residues Tyr-66, Asn-68, and Asn-114 each coordinate tRNA.

The protein belongs to the PTH family. As to quaternary structure, monomer.

Its subcellular location is the cytoplasm. The catalysed reaction is an N-acyl-L-alpha-aminoacyl-tRNA + H2O = an N-acyl-L-amino acid + a tRNA + H(+). Functionally, hydrolyzes ribosome-free peptidyl-tRNAs (with 1 or more amino acids incorporated), which drop off the ribosome during protein synthesis, or as a result of ribosome stalling. Catalyzes the release of premature peptidyl moieties from peptidyl-tRNA molecules trapped in stalled 50S ribosomal subunits, and thus maintains levels of free tRNAs and 50S ribosomes. In Burkholderia pseudomallei (strain K96243), this protein is Peptidyl-tRNA hydrolase.